Consider the following 441-residue polypeptide: Serine/threonine-protein kinase prk-2 (441 aa).

Positions 31 to 285 (YKLKAELGRG…LEAILNHPWV (255 aa)) constitute a Protein kinase domain. ATP is bound by residues 37–45 (LGRGGFGVV) and Lys60. Residue Asp158 is the Proton acceptor of the active site. The tract at residues 301 to 364 (QKKTSESSDD…NQKKPNHKEF (64 aa)) is disordered. Residues 303–320 (KTSESSDDHHSETLGDHS) are compositionally biased toward basic and acidic residues. Residues 328-338 (PPTSSVSQQPG) show a composition bias toward polar residues.

The protein belongs to the protein kinase superfamily. Ser/Thr protein kinase family. PIM subfamily. It depends on Mg(2+) as a cofactor.

It carries out the reaction L-seryl-[protein] + ATP = O-phospho-L-seryl-[protein] + ADP + H(+). The catalysed reaction is L-threonyl-[protein] + ATP = O-phospho-L-threonyl-[protein] + ADP + H(+). Involved in the negative regulation of synaptic differentiation in PLM neurons. This is Serine/threonine-protein kinase prk-2 from Caenorhabditis elegans.